Consider the following 155-residue polypeptide: UPF0260 protein Smed_0627 (155 aa).

This sequence belongs to the UPF0260 family.

The polypeptide is UPF0260 protein Smed_0627 (Sinorhizobium medicae (strain WSM419) (Ensifer medicae)).